Reading from the N-terminus, the 160-residue chain is ADP-ribose 1''-phosphate phosphatase (160 aa).

The 160-residue stretch at 1–160 (MTVKYIRGDL…SLDFNVYVID (160 aa)) folds into the Macro domain. Substrate is bound by residues 8 to 10 (GDL), 26 to 28 (ACN), 33 to 38 (WGGGIA), and 130 to 136 (INSGIFG).

It belongs to the POA1 family.

It carries out the reaction ADP-alpha-D-ribose 1''-phosphate + H2O = ADP-D-ribose + phosphate. In terms of biological role, highly specific phosphatase involved in the metabolism of ADP-ribose 1''-phosphate (Appr1p) which is produced as a consequence of tRNA splicing. Removes ADP-ribose from glutamate residues in proteins bearing a single ADP-ribose moiety. Inactive towards proteins bearing poly-ADP-ribose. The protein is ADP-ribose 1''-phosphate phosphatase (POA1) of Lodderomyces elongisporus (strain ATCC 11503 / CBS 2605 / JCM 1781 / NBRC 1676 / NRRL YB-4239) (Yeast).